Here is a 520-residue protein sequence, read N- to C-terminus: Putative transporter svop-1 (520 aa).

At 1–85 the chain is on the cytoplasmic side; it reads MGDKAILTEV…LGFGRFQLKL (85 aa). Residues 86–106 traverse the membrane as a helical segment; the sequence is SILTGMAWMADAMEMMLLSLI. At 107 to 120 the chain is on the extracellular side; the sequence is SPALACEWGISSVQ. Residues 121–141 form a helical membrane-spanning segment; the sequence is QALVTTCVFSGMMLSSTFWGK. The Cytoplasmic segment spans residues 142-157; that stretch reads ICDRFGRRKGLTFSTL. A helical membrane pass occupies residues 158 to 178; that stretch reads VACIMGVISGMSPHFYVLLFF. Position 179 (R179) is a topological domain, extracellular. The chain crosses the membrane as a helical span at residues 180 to 200; the sequence is GLTGFGIGGVPQSVTLYAEFL. The Cytoplasmic segment spans residues 201 to 208; it reads PTAQRAKC. Residues 209–229 traverse the membrane as a helical segment; it reads VVLIESFWAIGAVFEALLAYF. Residues 230–237 are Extracellular-facing; that stretch reads VMESFGWR. A helical membrane pass occupies residues 238-258; that stretch reads ALMFLSSLPLGIFAVASFWLP. At 259–319 the chain is on the cytoplasmic side; the sequence is ESARFDMASG…LLSPDLRKTT (61 aa). The helical transmembrane segment at 320–340 threads the bilayer; that stretch reads ILLWCIWAITAFSYYGMVLFT. Residues 341 to 372 are Extracellular-facing; the sequence is TVLFQSHDECHGGLFSNGTQMEVCQPLTRSDY. A helical transmembrane segment spans residues 373 to 393; the sequence is FDLLSTTLAEFPGLIITVLII. Topologically, residues 394–410 are cytoplasmic; that stretch reads EWFGRKKTMALEYAVFA. Residues 411-431 form a helical membrane-spanning segment; sequence IFTFLLYFCLDRFTVTVLIFV. Topologically, residues 432-434 are extracellular; sequence ARA. The helical transmembrane segment at 435–455 threads the bilayer; it reads FISGAFQCAYVYTPEVYPTTL. Residues 456 to 461 are Cytoplasmic-facing; that stretch reads RAVGLG. A helical transmembrane segment spans residues 462–487; the sequence is TCSAMARIGAIVTPFIAQVASEKSLS. At 488 to 489 the chain is on the extracellular side; that stretch reads LP. The chain crosses the membrane as a helical span at residues 490-509; the sequence is IGIYGTAAILGLIASLSLPI. The Cytoplasmic portion of the chain corresponds to 510 to 520; that stretch reads ETKGRQMMDSH.

Belongs to the major facilitator superfamily.

It localises to the membrane. The chain is Putative transporter svop-1 from Caenorhabditis elegans.